Consider the following 492-residue polypeptide: Glutamyl-tRNA(Gln) amidotransferase subunit A (492 aa).

Catalysis depends on charge relay system residues lysine 78 and serine 158. Residue serine 182 is the Acyl-ester intermediate of the active site.

It belongs to the amidase family. GatA subfamily. Heterotrimer of A, B and C subunits.

The catalysed reaction is L-glutamyl-tRNA(Gln) + L-glutamine + ATP + H2O = L-glutaminyl-tRNA(Gln) + L-glutamate + ADP + phosphate + H(+). Functionally, allows the formation of correctly charged Gln-tRNA(Gln) through the transamidation of misacylated Glu-tRNA(Gln) in organisms which lack glutaminyl-tRNA synthetase. The reaction takes place in the presence of glutamine and ATP through an activated gamma-phospho-Glu-tRNA(Gln). This chain is Glutamyl-tRNA(Gln) amidotransferase subunit A, found in Rickettsia akari (strain Hartford).